The sequence spans 273 residues: 4-hydroxy-tetrahydrodipicolinate reductase (273 aa).

Residues 12 to 17 (GAGGRM) and E38 each bind NAD(+). R39 serves as a coordination point for NADP(+). Residues 102–104 (GTT) and 126–129 (AANF) contribute to the NAD(+) site. Residue H159 is the Proton donor/acceptor of the active site. H160 contacts (S)-2,3,4,5-tetrahydrodipicolinate. The active-site Proton donor is the K163. Residue 169 to 170 (GT) coordinates (S)-2,3,4,5-tetrahydrodipicolinate.

This sequence belongs to the DapB family. Homotetramer.

The protein localises to the cytoplasm. It catalyses the reaction (S)-2,3,4,5-tetrahydrodipicolinate + NAD(+) + H2O = (2S,4S)-4-hydroxy-2,3,4,5-tetrahydrodipicolinate + NADH + H(+). It carries out the reaction (S)-2,3,4,5-tetrahydrodipicolinate + NADP(+) + H2O = (2S,4S)-4-hydroxy-2,3,4,5-tetrahydrodipicolinate + NADPH + H(+). The protein operates within amino-acid biosynthesis; L-lysine biosynthesis via DAP pathway; (S)-tetrahydrodipicolinate from L-aspartate: step 4/4. Functionally, catalyzes the conversion of 4-hydroxy-tetrahydrodipicolinate (HTPA) to tetrahydrodipicolinate. This Photorhabdus laumondii subsp. laumondii (strain DSM 15139 / CIP 105565 / TT01) (Photorhabdus luminescens subsp. laumondii) protein is 4-hydroxy-tetrahydrodipicolinate reductase.